A 360-amino-acid chain; its full sequence is Alpha-2-macroglobulin receptor-associated protein (360 aa).

Positions 1 to 33 (MAPLRDRVSTLPRLQLLVLLLLPLLLVPQPIAG) are cleaved as a signal peptide. A phosphoserine mark is found at S53 and S138. Positions 222-302 (SKHSELKDRL…KHNHYQKQLE (81 aa)) form a coiled coil. The segment at 240–356 (RLRKVSHQGY…DLSSRVSRAR (117 aa)) is LDL receptor binding. N271 carries N-linked (GlcNAc...) asparagine glycosylation. A Prevents secretion from ER motif is present at residues 357 to 360 (HNEL).

It belongs to the alpha-2-MRAP family. In terms of assembly, interacts with the LRP1/alpha-2-macroglobulin receptor heavy and light chains; the interaction is transient and coincides with a reduction of ligand binding by the receptor. Interacts with LRP2/glycoprotein 330. Interacts with LRP1B; binding is followed by internalization and degradation. Interacts with LDLR. Interacts with SORL1. Interacts with LRP1; this interaction is followed by rapid internalization. N-glycosylated.

It localises to the rough endoplasmic reticulum lumen. It is found in the endoplasmic reticulum-Golgi intermediate compartment lumen. The protein resides in the golgi apparatus. The protein localises to the cis-Golgi network. Its subcellular location is the golgi apparatus lumen. It localises to the endosome lumen. It is found in the cell surface. In terms of biological role, molecular chaperone for LDL receptor-related proteins that may regulate their ligand binding activity along the secretory pathway. In Rattus norvegicus (Rat), this protein is Alpha-2-macroglobulin receptor-associated protein (Lrpap1).